The chain runs to 633 residues: tRNA uridine 5-carboxymethylaminomethyl modification enzyme MnmG (633 aa).

18 to 23 (GAGHAG) contacts FAD. The tract at residues 208–232 (PRVNGNTIDFDKTEEQPGDKTPNHF) is disordered. The span at 216–229 (DFDKTEEQPGDKTP) shows a compositional bias: basic and acidic residues. Residue 279–293 (GPRYCPSIEDKIVRF) participates in NAD(+) binding.

This sequence belongs to the MnmG family. As to quaternary structure, homodimer. Heterotetramer of two MnmE and two MnmG subunits. FAD is required as a cofactor.

The protein localises to the cytoplasm. Its function is as follows. NAD-binding protein involved in the addition of a carboxymethylaminomethyl (cmnm) group at the wobble position (U34) of certain tRNAs, forming tRNA-cmnm(5)s(2)U34. This Lacticaseibacillus paracasei (strain ATCC 334 / BCRC 17002 / CCUG 31169 / CIP 107868 / KCTC 3260 / NRRL B-441) (Lactobacillus paracasei) protein is tRNA uridine 5-carboxymethylaminomethyl modification enzyme MnmG.